The sequence spans 220 residues: SAGA-associated factor 11 homolog (220 aa).

Residues 1 to 38 (MSTGTANSAVSSKSTNSTTSTSKVPVNEKSNNSQNANT) form a disordered region. The SGF11-type zinc finger occupies 126–147 (CTCPNCDRPVSAARFAPHLEKC). 2 stretches are compositionally biased toward low complexity: residues 160–177 (RRLA…SSSS) and 204–220 (SQNS…GKTF). The interval 160–220 (RRLATKESNS…GSKKNNGKTF (61 aa)) is disordered.

Belongs to the SGF11 family. In terms of assembly, component of some SAGA transcription coactivator-HAT complexes. Within the SAGA complex, participates in a subcomplex of SAGA called the DUB module (deubiquitination module).

The protein localises to the nucleus. In terms of biological role, component of the transcription regulatory histone acetylation (HAT) complex SAGA, a multiprotein complex that activates transcription by remodeling chromatin and mediating histone acetylation and deubiquitination. Within the SAGA complex, participates in a subcomplex that specifically deubiquitinates histone H2B. The SAGA complex is recruited to specific gene promoters by activators, where it is required for transcription. The polypeptide is SAGA-associated factor 11 homolog (Musca domestica (House fly)).